A 150-amino-acid chain; its full sequence is Submaxillary gland androgen-regulated protein 2, isoform alpha (150 aa).

Positions 1 to 22 (MKALYMVFVLWVLIGCFLSGEC) are cleaved as a signal peptide.

Its subcellular location is the secreted. Functionally, may play a role in protection or detoxification. This chain is Submaxillary gland androgen-regulated protein 2, isoform alpha (Smr2), found in Mus musculus (Mouse).